The primary structure comprises 37 residues: Large ribosomal subunit protein bL36 (37 aa).

This sequence belongs to the bacterial ribosomal protein bL36 family.

In Prochlorococcus marinus (strain MIT 9303), this protein is Large ribosomal subunit protein bL36.